The following is a 999-amino-acid chain: SYGYDEKSAGGISVPGPMGPSGPRGLPGPPGAPGPQGFQGPPGEPGEPGSGPMGPRGPPGPPGKNGDDGEAGKPGRPGERGPPGPQGARGLPGTAGLPGMKGHRGFSGLDGAKGDAGPAGPKGEPGSPGENGAPGQMGPRGLPGERGRPGASGPAGARGNDGATGAAGPPGPTGPAGPPGFPGAVGAKGEAGPQGARGSEGPQGVRGEPGPPGPAGAAGPAGNPGADGQPGAKGANGAPGIAGAPGFPGARGPSGPQGPSGPPGPKGNSGEPGAPGSKGDTGAKGEPGPTGIQGPPGPAGEEGKRGARGEPGPTGLPGPPGERGGPGSRGFPGADGVAGPKGPAGERGSPGPAGPKGSPGEAGRPGEAGLPGAKGLTGSPGSPGPDGKTGPPGPAGQDGRPGPPGPPGARGQAGVMGFPGPKGAERGVPGPPGAVGPAGKDGEAGAQGPPGPAGPAGERGEQGPAGSPGFQGLPGPAGPPGEAGKPGEQGVPGDLGAPGPSGARGVQGPPGPAGPRGGDAGAPGAPGSQGAPGLQGMPGERGAAGLPGPKGDRGDAGPKGADGAPGKDGVRGLTGPIGPPGPAGAPGDKGESGPSGPAGPTGARGAPGDRGEPGPPGPAGFAGPPGADGQPGAKGEPGDAGAKGDAGPPGPAGPTGPPGPIGNVGAPGPKGARGSAGPPGATGFPGAAGRVGPPGPSGNAGPPGPPGPVGKEGGKGPRGETGPAGRPGEVGPPGPPGPSGEKGSPGADGPAGAPGTPGPQGISGQRGVVGLPGQRGERGFPGLPGPSGEPGKQGPSGSSGERGPPGPVGPPGLAGPPGESGREGSPGAEGSPGRDGSPGPKGDRGETGPGPPGAPGAPGAPGPVGPAGKNGDRGETGPAGPAGPAGPAGARGPAGPQGPRGDKGETGEQGDRGIKGHRGFSGLQGPAGPPGSPGEQGPSGASGPAGPRGPPGSAGSPGKDGLNGLPGPIGPPGPRGRTGDAGPVGPPGPPGPPGPPGPP.

Positions Ser-1 to Pro-999 are disordered. Allysine is present on Lys-7. Ser-8 carries the post-translational modification Phosphoserine. Pro-27, Pro-30, Pro-33, Pro-42, Pro-45, Pro-48, Pro-62, Pro-77, Pro-83, Pro-92, and Pro-98 each carry 4-hydroxyproline. Over residues Asn-65–Glu-79 the composition is skewed to basic and acidic residues. Lys-101 carries the post-translational modification 5-hydroxylysine; alternate. Lys-101 is a glycosylation site (O-linked (Gal...) hydroxylysine; alternate). Ser-107 carries the phosphoserine modification. The span at Asp-115–Asn-131 shows a compositional bias: low complexity. 4-hydroxyproline occurs at positions 125, 128, 134, 143, 149, 170, 179, 182, 209, 212, 224, 230, 239, 245, 248, and 263. The segment covering Pro-149–Ala-167 has biased composition (low complexity). Residues Pro-169 to Phe-181 are compositionally biased toward pro residues. Residues Ala-215–Ser-254 show a composition bias toward low complexity. At Lys-266 the chain carries 5-hydroxylysine. 4-hydroxyproline occurs at positions 272, 275, 287, 296, 311, 317, 326, and 332. Gly residues predominate over residues Gly-321–Gly-330. Lys-341 is modified (5-hydroxylysine). Residues Pro-350, Pro-359, Pro-365, Pro-371, Pro-380, Pro-383, Pro-392, Pro-401, Pro-407, Pro-419, Pro-429, Pro-432, Pro-450, Pro-468, Pro-474, Pro-480, Pro-486, Pro-492, Pro-498, Pro-510, Pro-526, Pro-532, Pro-538, and Pro-547 each carry the 4-hydroxyproline modification. Low complexity predominate over residues Lys-374–Arg-400. Low complexity predominate over residues Gln-462–Gln-489. The segment covering Ala-522 to Gln-535 has biased composition (low complexity). 5-hydroxylysine is present on Lys-559. Pro-565, Pro-580, and Pro-586 each carry 4-hydroxyproline. Low complexity predominate over residues Ser-592–Ala-606. Ser-595 bears the Phosphoserine mark. 4-hydroxyproline occurs at positions 607, 613, 616, 625, 631, 649, 658, and 667. Residues Ala-619–Ala-646 are compositionally biased toward low complexity. The span at Pro-648–Pro-660 shows a compositional bias: pro residues. Residue Lys-670 is modified to 5-hydroxylysine. The segment covering Ser-675 to Val-691 has biased composition (low complexity). Residues Pro-679 and Pro-685 each carry the 4-hydroxyproline modification. A 3-hydroxyproline modification is found at Pro-693. 4-hydroxyproline is present on residues Pro-694, Pro-703, Pro-706, Pro-727, Pro-736, Pro-745, Pro-754, Pro-772, Pro-781, Pro-784, Pro-790, Pro-805, Pro-811, Pro-817, Pro-826, and Pro-832. Low complexity predominate over residues Glu-720–Glu-729. Low complexity predominate over residues Ser-739–Pro-754. Pro residues predominate over residues Pro-804–Ala-814. Positions Pro-816 to Ser-831 are enriched in low complexity. The residue at position 841 (Lys-841) is a 5-hydroxylysine. Residues Pro-849 to Val-864 are compositionally biased toward pro residues. A 4-hydroxyproline mark is found at Pro-852, Pro-855, and Pro-858. Low complexity predominate over residues Ala-885–Pro-899. Positions Arg-900–Ile-914 are enriched in basic and acidic residues. Lys-903 is modified (5-hydroxylysine). At Lys-915 the chain carries 5-hydroxylysine; alternate. Residue Lys-915 is glycosylated (O-linked (Gal...) hydroxylysine; alternate). Residues Pro-930, Pro-933, Pro-951, and Pro-966 each carry the 4-hydroxyproline modification. The span at Pro-933–Pro-966 shows a compositional bias: low complexity. Pro-971 is modified (3-hydroxyproline). 4-hydroxyproline is present on Pro-972. Residues Val-984–Pro-999 are compositionally biased toward pro residues. A 3-hydroxyproline modification is found at Pro-986. Pro-987 is subject to 4-hydroxyproline. 3-hydroxyproline is present on Pro-989. Pro-990 is modified (4-hydroxyproline). 3-hydroxyproline is present on Pro-992. 4-hydroxyproline is present on residues Pro-993, Pro-996, and Pro-999.

The protein belongs to the fibrillar collagen family. In terms of assembly, trimers of one alpha 2(I) and two alpha 1(I) chains. Post-translationally, contains mostly 4-hydroxyproline. Proline residues at the third position of the tripeptide repeating unit (G-X-Y) are hydroxylated in some or all of the chains. In terms of processing, contains 3-hydroxyproline at a few sites. This modification occurs on the first proline residue in the sequence motif Gly-Pro-Hyp, where Hyp is 4-hydroxyproline. Lysine residues at the third position of the tripeptide repeating unit (G-X-Y) are 5-hydroxylated in some or all of the chains. Post-translationally, O-glycosylated on hydroxylated lysine residues. The O-linked glycan consists of a Glc-Gal disaccharide. As to expression, expressed in bones.

Its subcellular location is the secreted. The protein localises to the extracellular space. It is found in the extracellular matrix. Type I collagen is a member of group I collagen (fibrillar forming collagen). The protein is Collagen alpha-1(I) chain of Choloepus hoffmanni (Hoffmann's two-fingered sloth).